A 233-amino-acid polypeptide reads, in one-letter code: Histidinol dehydrogenase (233 aa).

3 residues coordinate substrate: Ser-31, Gln-53, and His-56. Residues Gln-53 and His-56 each contribute to the Zn(2+) site. Active-site proton acceptor residues include Glu-121 and His-122. Residues His-122, Asp-155, Glu-209, and His-214 each contribute to the substrate site. Asp-155 is a binding site for Zn(2+). His-214 contributes to the Zn(2+) binding site.

Belongs to the histidinol dehydrogenase family. It depends on Zn(2+) as a cofactor.

It catalyses the reaction L-histidinol + 2 NAD(+) + H2O = L-histidine + 2 NADH + 3 H(+). It participates in amino-acid biosynthesis; L-histidine biosynthesis; L-histidine from 5-phospho-alpha-D-ribose 1-diphosphate: step 9/9. Functionally, catalyzes the sequential NAD-dependent oxidations of L-histidinol to L-histidinaldehyde and then to L-histidine. This Thiocapsa roseopersicina protein is Histidinol dehydrogenase (hisD).